Reading from the N-terminus, the 334-residue chain is Mevalonate kinase (334 aa).

An ATP-binding site is contributed by 110–120; it reads PVGAGLGSSAA. Aspartate 161 acts as the Proton acceptor in catalysis.

It belongs to the GHMP kinase family. Mevalonate kinase subfamily. In terms of assembly, homodimer. Mg(2+) serves as cofactor.

The protein localises to the cytoplasm. It carries out the reaction (R)-mevalonate + ATP = (R)-5-phosphomevalonate + ADP + H(+). It participates in isoprenoid biosynthesis; isopentenyl diphosphate biosynthesis via mevalonate pathway; isopentenyl diphosphate from (R)-mevalonate: step 1/3. Its function is as follows. Catalyzes the phosphorylation of (R)-mevalonate (MVA) to (R)-mevalonate 5-phosphate (MVAP). Functions in the mevalonate (MVA) pathway leading to isopentenyl diphosphate (IPP), a key precursor for the biosynthesis of isoprenoid compounds such as archaeal membrane lipids. The sequence is that of Mevalonate kinase from Thermococcus onnurineus (strain NA1).